The primary structure comprises 352 residues: UDP-N-acetylglucosamine--N-acetylmuramyl-(pentapeptide) pyrophosphoryl-undecaprenol N-acetylglucosamine transferase 2 (352 aa).

Residues 11 to 13 (SAG), R164, S194, and Q289 contribute to the UDP-N-acetyl-alpha-D-glucosamine site.

The protein belongs to the glycosyltransferase 28 family. MurG subfamily.

The protein resides in the cell membrane. It catalyses the reaction di-trans,octa-cis-undecaprenyl diphospho-N-acetyl-alpha-D-muramoyl-L-alanyl-D-glutamyl-meso-2,6-diaminopimeloyl-D-alanyl-D-alanine + UDP-N-acetyl-alpha-D-glucosamine = di-trans,octa-cis-undecaprenyl diphospho-[N-acetyl-alpha-D-glucosaminyl-(1-&gt;4)]-N-acetyl-alpha-D-muramoyl-L-alanyl-D-glutamyl-meso-2,6-diaminopimeloyl-D-alanyl-D-alanine + UDP + H(+). It participates in cell wall biogenesis; peptidoglycan biosynthesis. Cell wall formation. Catalyzes the transfer of a GlcNAc subunit on undecaprenyl-pyrophosphoryl-MurNAc-pentapeptide (lipid intermediate I) to form undecaprenyl-pyrophosphoryl-MurNAc-(pentapeptide)GlcNAc (lipid intermediate II). This Bacillus cereus (strain ATCC 14579 / DSM 31 / CCUG 7414 / JCM 2152 / NBRC 15305 / NCIMB 9373 / NCTC 2599 / NRRL B-3711) protein is UDP-N-acetylglucosamine--N-acetylmuramyl-(pentapeptide) pyrophosphoryl-undecaprenol N-acetylglucosamine transferase 2.